The primary structure comprises 587 residues: Phosphatidylinositol-3-phosphatase SAC1 (587 aa).

The Cytoplasmic segment spans residues 1–520 (MATAAYEQLK…SPLSVPRDWK (520 aa)). An SAC domain is found at 122 to 451 (LNHVLNVDGF…ANACAKQYAG (330 aa)). An essential for phosphatidylinositol-4-phosphate phosphatase activity region spans residues 452-587 (TGALKTDFTR…PRLVQKEKID (136 aa)). An N6-acetyllysine modification is found at Lys456. Residues 521–541 (FLALPIIMVVAFSMCIICLLM) form a helical membrane-spanning segment. At 542–548 (AGDTWTE) the chain is on the lumenal side. Residues 549–569 (TLAYVLFWGVASIGTFFIILY) traverse the membrane as a helical segment. The Cytoplasmic segment spans residues 570 to 587 (NGKDFVDAPRLVQKEKID).

As to quaternary structure, interacts with TMEM39A. Interacts with SEC23A and SEC24A; this interaction is reduced in the absence of TMEM39A. Interacts with PLEKHA3 and VAPA and/or VAPB to form a ternary complex.

It is found in the endoplasmic reticulum membrane. The protein resides in the golgi apparatus membrane. It carries out the reaction a 1,2-diacyl-sn-glycero-3-phospho-(1D-myo-inositol-3-phosphate) + H2O = a 1,2-diacyl-sn-glycero-3-phospho-(1D-myo-inositol) + phosphate. It catalyses the reaction a 1,2-diacyl-sn-glycero-3-phospho-(1D-myo-inositol 4-phosphate) + H2O = a 1,2-diacyl-sn-glycero-3-phospho-(1D-myo-inositol) + phosphate. Its function is as follows. Phosphoinositide phosphatase which catalyzes the hydrolysis of phosphatidylinositol 4-phosphate (PtdIns(4)P), phosphatidylinositol 3-phosphate (PtdIns(3)P) and has low activity towards phosphatidylinositol-3,5-bisphosphate (PtdIns(3,5)P2). Shows a very robust PtdIns(4)P phosphatase activity when it binds PtdIns(4)P in a 'cis' configuration in the cellular environment, with much less activity seen when it binds PtdIns(4)P in 'trans' configuration. PtdIns(4)P phosphatase activity (when it binds PtdIns(4)P in 'trans' configuration) is enhanced in the presence of PLEKHA3. This chain is Phosphatidylinositol-3-phosphatase SAC1 (SACM1L), found in Pongo abelii (Sumatran orangutan).